Consider the following 110-residue polypeptide: UPF0251 protein PYRAB12660 (110 aa).

The protein belongs to the UPF0251 family.

The chain is UPF0251 protein PYRAB12660 from Pyrococcus abyssi (strain GE5 / Orsay).